Here is a 121-residue protein sequence, read N- to C-terminus: Large ribosomal subunit protein uL14c (121 aa).

As to quaternary structure, component of the chloroplast large ribosomal subunit (LSU). Mature 70S chloroplast ribosomes of higher plants consist of a small (30S) and a large (50S) subunit. The 30S small subunit contains 1 molecule of ribosomal RNA (16S rRNA) and 24 different proteins. The 50S large subunit contains 3 rRNA molecules (23S, 5S and 4.5S rRNA) and 33 different proteins.

It is found in the plastid. The protein resides in the chloroplast. Component of the chloroplast ribosome (chloro-ribosome), a dedicated translation machinery responsible for the synthesis of chloroplast genome-encoded proteins, including proteins of the transcription and translation machinery and components of the photosynthetic apparatus. This chain is Large ribosomal subunit protein uL14c, found in Spinacia oleracea (Spinach).